We begin with the raw amino-acid sequence, 375 residues long: Naringenin 7-O-methyltransferase (375 aa).

Residue 136-142 participates in substrate binding; that stretch reads LNLDKVF. The interval 168–188 is substrate binding; sequence LFQYLGQDGNEPSNTLFNQAM. 4 residues coordinate S-adenosyl-L-methionine: Gly-219, Asp-242, Met-263, and Lys-276. His-280 serves as the catalytic Proton acceptor.

The protein belongs to the class I-like SAM-binding methyltransferase superfamily. Cation-independent O-methyltransferase family. COMT subfamily.

The enzyme catalyses (2S)-naringenin + S-adenosyl-L-methionine = (2S)-sakuranetin + S-adenosyl-L-homocysteine + H(+). Its function is as follows. S-adenosyl-L-methionine-dependent methyltransferase involved in the biosynthesis of the sakuranetin, an inducible defense mechanism of O.sativa against pathogen attack. This chain is Naringenin 7-O-methyltransferase, found in Oryza sativa subsp. japonica (Rice).